The chain runs to 401 residues: Exodeoxyribonuclease 7 large subunit (401 aa).

Belongs to the XseA family. As to quaternary structure, heterooligomer composed of large and small subunits.

Its subcellular location is the cytoplasm. It carries out the reaction Exonucleolytic cleavage in either 5'- to 3'- or 3'- to 5'-direction to yield nucleoside 5'-phosphates.. Bidirectionally degrades single-stranded DNA into large acid-insoluble oligonucleotides, which are then degraded further into small acid-soluble oligonucleotides. The sequence is that of Exodeoxyribonuclease 7 large subunit from Thermoanaerobacter pseudethanolicus (strain ATCC 33223 / 39E) (Clostridium thermohydrosulfuricum).